A 442-amino-acid polypeptide reads, in one-letter code: Inner membrane protein PPF-1, chloroplastic (442 aa).

Over M1 to G108 the chain is Lumenal. Residues L109–V129 form a helical membrane-spanning segment. The Stromal portion of the chain corresponds to K130–P183. Residues L184–L204 traverse the membrane as a helical segment. Residues S205–F296 are Lumenal-facing. Residues L297–F317 traverse the membrane as a helical segment. The Stromal segment spans residues T318–A442. Disordered regions lie at residues A350–K371 and P390–A442. The segment covering S358 to K371 has biased composition (basic and acidic residues). Residues E414–F427 are compositionally biased toward polar residues. The segment covering R431 to A442 has biased composition (basic residues).

The protein belongs to the OXA1/ALB3/YidC (TC 2.A.9.2) family. In terms of tissue distribution, highly expressed in apical buds. Low levels of expression in leaves. Not expressed in roots, and stems.

It is found in the plastid. The protein resides in the chloroplast thylakoid membrane. In terms of biological role, may be required for the insertion of some integral membrane proteins into the chloroplast thylakoid membrane. May play a role in inhibiting senescence. The sequence is that of Inner membrane protein PPF-1, chloroplastic (PPF-1) from Pisum sativum (Garden pea).